The primary structure comprises 205 residues: Transcriptional regulator GfcR (205 aa).

This sequence belongs to the purine/pyrimidine phosphoribosyltransferase family. GfcR subfamily.

The chain is Transcriptional regulator GfcR from Methanococcus maripaludis (strain C7 / ATCC BAA-1331).